Reading from the N-terminus, the 285-residue chain is ATP synthase gamma chain (285 aa).

Belongs to the ATPase gamma chain family. In terms of assembly, F-type ATPases have 2 components, CF(1) - the catalytic core - and CF(0) - the membrane proton channel. CF(1) has five subunits: alpha(3), beta(3), gamma(1), delta(1), epsilon(1). CF(0) has three main subunits: a, b and c.

The protein localises to the cell membrane. Functionally, produces ATP from ADP in the presence of a proton gradient across the membrane. The gamma chain is believed to be important in regulating ATPase activity and the flow of protons through the CF(0) complex. In Clostridium novyi (strain NT), this protein is ATP synthase gamma chain.